Consider the following 403-residue polypeptide: Argininosuccinate synthase (403 aa).

Residue 9-17 participates in ATP binding; sequence AYSGGLDTS. Y86 provides a ligand contact to L-citrulline. Position 116 (G116) interacts with ATP. L-aspartate-binding residues include T118, N122, and D123. N122 is a binding site for L-citrulline. 5 residues coordinate L-citrulline: R126, S174, S183, E259, and Y271.

The protein belongs to the argininosuccinate synthase family. Type 1 subfamily. As to quaternary structure, homotetramer.

The protein resides in the cytoplasm. The catalysed reaction is L-citrulline + L-aspartate + ATP = 2-(N(omega)-L-arginino)succinate + AMP + diphosphate + H(+). Its pathway is amino-acid biosynthesis; L-arginine biosynthesis; L-arginine from L-ornithine and carbamoyl phosphate: step 2/3. The protein is Argininosuccinate synthase of Shouchella clausii (strain KSM-K16) (Alkalihalobacillus clausii).